The sequence spans 303 residues: Olfactory receptor 10A2 (303 aa).

Over 1-12 (MSFSSLPTEIQS) the chain is Extracellular. Residues 13 to 33 (LLFLTFLTIYLVTLMGNCLII) form a helical membrane-spanning segment. Residues 34–41 (LVTLADPM) are Cytoplasmic-facing. The helical transmembrane segment at 42–62 (LHSPMYFFLRNLSFLEIGFNL) threads the bilayer. The Extracellular segment spans residues 63–86 (VIVPKMLGTLLAQDTTISFLGCAT). An intrachain disulfide couples Cys-84 to Cys-176. A helical membrane pass occupies residues 87 to 107 (QMYFFFFFGVAECFLLATMAY). The Cytoplasmic segment spans residues 108–126 (DRYVAICSPLHYPVIMNQR). A helical transmembrane segment spans residues 127–147 (TRAKLAAASWFPGFPVATVQT). The Extracellular portion of the chain corresponds to 148–184 (TWLFSFPFCGTNKVNHFFCDSPPVLRLVCADTALFEI). Residues 185-204 (YAIVGTILVVMIPCLLILCS) traverse the membrane as a helical segment. Residues 205–224 (YTHIAAAILKIPSAKGKNKA) are Cytoplasmic-facing. The chain crosses the membrane as a helical span at residues 225-245 (FSTCSSHLLVVSLFYISLSLT). At 246-258 (YFRPKSNNSPEGK) the chain is on the extracellular side. A helical membrane pass occupies residues 259–279 (KLLSLSYTVMTPMLNPIIYSL). Residues 280-301 (RNNEVKNALSRTVSKALALRNC) are Cytoplasmic-facing.

This sequence belongs to the G-protein coupled receptor 1 family.

The protein resides in the cell membrane. Functionally, odorant receptor. This Homo sapiens (Human) protein is Olfactory receptor 10A2 (OR10A2).